Here is a 1391-residue protein sequence, read N- to C-terminus: DNA-directed RNA polymerase subunit beta'' (1391 aa).

Positions 224, 295, 302, and 305 each coordinate Zn(2+).

Belongs to the RNA polymerase beta' chain family. RpoC2 subfamily. As to quaternary structure, in plastids the minimal PEP RNA polymerase catalytic core is composed of four subunits: alpha, beta, beta', and beta''. When a (nuclear-encoded) sigma factor is associated with the core the holoenzyme is formed, which can initiate transcription. It depends on Zn(2+) as a cofactor.

It localises to the plastid. The protein localises to the chloroplast. It catalyses the reaction RNA(n) + a ribonucleoside 5'-triphosphate = RNA(n+1) + diphosphate. In terms of biological role, DNA-dependent RNA polymerase catalyzes the transcription of DNA into RNA using the four ribonucleoside triphosphates as substrates. The protein is DNA-directed RNA polymerase subunit beta'' of Buxus microphylla (Littleleaf boxwood).